The sequence spans 157 residues: Protein Smg homolog (157 aa).

This sequence belongs to the Smg family.

The polypeptide is Protein Smg homolog (Stenotrophomonas maltophilia (strain R551-3)).